The sequence spans 276 residues: Methylesterase 17 (276 aa).

Residues 19 to 138 enclose the AB hydrolase-1 domain; the sequence is PHFVLIHGMS…TDEDMKDGVP (120 aa). Residue serine 95 is the Acyl-ester intermediate of the active site. Residues aspartate 225 and histidine 252 each act as charge relay system in the active site.

Belongs to the AB hydrolase superfamily. Methylesterase family. Expressed in several tissues of seedlings and adult plants, with a higher relative level of expression in the seedling shoot apex and the adult stem.

It carries out the reaction methyl (indol-3-yl)acetate + H2O = (indol-3-yl)acetate + methanol + H(+). It functions in the pathway plant hormone biosynthesis. In terms of biological role, methylesterase that efficiently and specifically hydrolyzes methyl indole-3-acetic acid (MeIAA) to IAA (auxin). MeIAA is believed to be an inactive form of auxin that needs to be demethylated to exert a biological effect. This Arabidopsis thaliana (Mouse-ear cress) protein is Methylesterase 17.